The sequence spans 229 residues: Lipoprotein-releasing system ATP-binding protein LolD (229 aa).

One can recognise an ABC transporter domain in the interval 7 to 229; sequence LKCKNVTKTY…KNGKLYKKNL (223 aa). ATP is bound at residue 43 to 50; it reads GDSGSGKS.

This sequence belongs to the ABC transporter superfamily. Lipoprotein translocase (TC 3.A.1.125) family. In terms of assembly, the complex is composed of two ATP-binding proteins (LolD) and two transmembrane proteins (LolC and LolE).

It is found in the cell membrane. Functionally, part of the ABC transporter complex LolCDE involved in the translocation of lipoproteins, in an ATP-dependent manner. This Wigglesworthia glossinidia brevipalpis protein is Lipoprotein-releasing system ATP-binding protein LolD.